Reading from the N-terminus, the 94-residue chain is Integration host factor subunit beta (94 aa).

This sequence belongs to the bacterial histone-like protein family. As to quaternary structure, heterodimer of an alpha and a beta chain.

In terms of biological role, this protein is one of the two subunits of integration host factor, a specific DNA-binding protein that functions in genetic recombination as well as in transcriptional and translational control. This is Integration host factor subunit beta from Yersinia pseudotuberculosis serotype O:1b (strain IP 31758).